Consider the following 306-residue polypeptide: MNTKEKHSDLIKAEAIRLGFLSCGISKANFLEEEAPRLEKWLKNNMNGEMQYMENHFDKRLDPRLLVDDAKSVISLTLNYYPEEQQADGTYKISKYAYGHDYHHVIKGKLKQLQEFISEEIGEVGGRAFVDSAPVLDKAWAAKSGLGWIGKHSNLLTQKTGSFYFIAELIVDLDLTYDHPVTDHCGTCTACIDACPTQAIVQPYVVDGSKCISYFTIELKNEIPQEFQGKFDDWAFGCDVCQDVCPWNRFSKPHSEPLFNPHPDLLSLTKKDWEEITDDVFKKVFQKSAVKRTKYAGLKRNIDFLK.

Aspartate 131 acts as the Proton donor in catalysis. The 4Fe-4S ferredoxin-type domain maps to leucine 173–valine 205. [4Fe-4S] cluster contacts are provided by cysteine 185, cysteine 188, cysteine 191, cysteine 195, cysteine 211, cysteine 238, cysteine 241, and cysteine 245.

The protein belongs to the QueG family. In terms of assembly, monomer. Cob(II)alamin is required as a cofactor. It depends on [4Fe-4S] cluster as a cofactor.

It localises to the cytoplasm. The catalysed reaction is epoxyqueuosine(34) in tRNA + AH2 = queuosine(34) in tRNA + A + H2O. It functions in the pathway tRNA modification; tRNA-queuosine biosynthesis. In terms of biological role, catalyzes the conversion of epoxyqueuosine (oQ) to queuosine (Q), which is a hypermodified base found in the wobble positions of tRNA(Asp), tRNA(Asn), tRNA(His) and tRNA(Tyr). This chain is Epoxyqueuosine reductase, found in Cellulophaga algicola (strain DSM 14237 / IC166 / ACAM 630).